A 389-amino-acid polypeptide reads, in one-letter code: Spore coat polysaccharide biosynthesis protein SpsC (389 aa).

An N6-(pyridoxal phosphate)lysine modification is found at Lys-187.

Belongs to the DegT/DnrJ/EryC1 family. It depends on pyridoxal 5'-phosphate as a cofactor.

It participates in spore coat biogenesis; spore coat polysaccharide biosynthesis. The protein is Spore coat polysaccharide biosynthesis protein SpsC (spsC) of Bacillus subtilis (strain 168).